Here is a 183-residue protein sequence, read N- to C-terminus: uncharacterized protein (183 aa).

The next 4 helical transmembrane spans lie at 26-48 (FVAI…IIFY), 72-91 (LLVR…KVFI), 104-121 (IIEA…LIVF), and 125-147 (FTFW…YVLL).

Its subcellular location is the cell membrane. This is an uncharacterized protein from Aquifex aeolicus (strain VF5).